Reading from the N-terminus, the 114-residue chain is Large ribosomal subunit protein uL22 (114 aa).

The protein belongs to the universal ribosomal protein uL22 family. In terms of assembly, part of the 50S ribosomal subunit.

Its function is as follows. This protein binds specifically to 23S rRNA; its binding is stimulated by other ribosomal proteins, e.g. L4, L17, and L20. It is important during the early stages of 50S assembly. It makes multiple contacts with different domains of the 23S rRNA in the assembled 50S subunit and ribosome. The globular domain of the protein is located near the polypeptide exit tunnel on the outside of the subunit, while an extended beta-hairpin is found that lines the wall of the exit tunnel in the center of the 70S ribosome. The chain is Large ribosomal subunit protein uL22 from Ehrlichia chaffeensis (strain ATCC CRL-10679 / Arkansas).